Consider the following 310-residue polypeptide: uncharacterized protein (310 aa).

Transmembrane regions (helical) follow at residues Met-1–Lys-21, Phe-38–Thr-58, Thr-74–Phe-94, Tyr-110–Phe-130, Trp-135–Ser-155, Ile-194–Ser-214, Leu-228–Phe-248, Phe-256–Ile-276, and Ile-284–Ile-304.

This sequence belongs to the TerC family.

Its subcellular location is the cell membrane. This is an uncharacterized protein from Buchnera aphidicola subsp. Schizaphis graminum (strain Sg).